Consider the following 802-residue polypeptide: Homeobox-leucine zipper protein ANTHOCYANINLESS 2 (802 aa).

The interval 71–143 (QPERGTNRGE…RKKRYHRHTP (73 aa)) is disordered. The segment covering 103-113 (RSREEEHESRS) has biased composition (basic and acidic residues). The span at 133–142 (PRKKRYHRHT) shows a compositional bias: basic residues. Positions 134 to 193 (RKKRYHRHTPQQIQELESMFKECPHPDEKQRLELSKRLCLETRQVKFWFQNRRTQMKTQL) form a DNA-binding region, homeobox. Positions 182–221 (FQNRRTQMKTQLERHENALLRQENDKLRAENMSIREAMRN) form a coiled coil. Residues 315–546 (GIDQKSVLLE…LQRQCECLAI (232 aa)) form the START domain.

This sequence belongs to the HD-ZIP homeobox family. Class IV subfamily. As to quaternary structure, interacts with AIL7/PLT7, ANT, BBM and AIL1. As to expression, expressed in roots, stems, leaves and floral buds.

It is found in the nucleus. Probable transcription factor involved in the regulation of the tissue-specific accumulation of anthocyanins and in cellular organization of the primary root. This Arabidopsis thaliana (Mouse-ear cress) protein is Homeobox-leucine zipper protein ANTHOCYANINLESS 2.